We begin with the raw amino-acid sequence, 308 residues long: 4-hydroxyproline 2-epimerase (308 aa).

Cys-88 (proton acceptor) is an active-site residue. Residues 89 to 90 (GH), His-208, and Asp-232 contribute to the substrate site. Cys-236 (proton donor) is an active-site residue. 237–238 (GT) serves as a coordination point for substrate.

It belongs to the proline racemase family.

The catalysed reaction is trans-4-hydroxy-L-proline = cis-4-hydroxy-D-proline. Catalyzes the epimerization of trans-4-hydroxy-L-proline (t4LHyp) to cis-4-hydroxy-D-proline (c4DHyp). Is likely involved in a degradation pathway that converts t4LHyp to alpha-ketoglutarate. Can also catalyze the epimerization of trans-3-hydroxy-L-proline (t3LHyp) to cis-3-hydroxy-D-proline (c3DHyp), albeit with 200-fold lower efficiency. This is 4-hydroxyproline 2-epimerase from Pseudomonas putida (strain ATCC 700007 / DSM 6899 / JCM 31910 / BCRC 17059 / LMG 24140 / F1).